A 198-amino-acid polypeptide reads, in one-letter code: Alkyl hydroperoxide reductase C (198 aa).

Residues 2–163 (TLVTQKAPNF…MIRMIDALNF (162 aa)) enclose the Thioredoxin domain. Residue Cys-50 is the Cysteine sulfenic acid (-SOH) intermediate of the active site.

It belongs to the peroxiredoxin family. AhpC/Prx1 subfamily. In terms of assembly, homodimer; disulfide-linked, upon oxidation. 5 homodimers assemble to form a ring-like decamer.

The protein resides in the cytoplasm. It carries out the reaction a hydroperoxide + NADH + H(+) = an alcohol + NAD(+) + H2O. Functionally, thiol-specific peroxidase that catalyzes the reduction of hydrogen peroxide and organic hydroperoxides to water and alcohols, respectively. Plays a role in cell protection against oxidative stress by detoxifying peroxides. The sequence is that of Alkyl hydroperoxide reductase C from Buchnera aphidicola subsp. Schizaphis graminum (strain Sg).